The sequence spans 970 residues: Toxin subunit YenC2 (970 aa).

RHS repeat units follow at residues 168-182 (AGQC…GLIQ), 297-311 (GVVT…TQRL), 329-343 (LQDL…GNVL), 361-375 (VPEN…YQLV), 408-422 (NYTR…GNLM), 500-514 (DDSE…SQRI), 580-594 (NDQI…TCSS), 606-620 (SMEE…AVWA), and 640-654 (DATG…YYQP). Residues 610–690 (YYPYGGTAVW…PLRLTDPDGM (81 aa)) are RHS-repeat associated core domain. Residues 849–950 (TEAFITGIRS…YNCSGIISGL (102 aa)) are deaminase domain.

Belongs to the RHS family. In terms of assembly, semipurified toxin complex consists of at least YenA1-YenA2-YenB-YenC1-YenC2-Chi1-Chi2. YenB and the N-terminus of YenC2 form a large hollow shell of beta-strands. The shell is closed at both ends, within which the C-terminus of YenC2 is probably found. The C-terminal region dissociates from the YenB-YenC2 complex at pH 4.5 but not 7.5. The Yen-TC:K9 subcomplex is about 26 nm tall and 22 nm in diameter with 5-fold symmetry and 5 copies of YenA1, YenA2, Chi1 and Chi2; the chitinase subunits may be solvent accessible on the exterior the complex. The Yen-TC:K9 subcomplex has no insecticidal activity. The native complex with additional YenB, YenC1 and YenC2 subunits is 16 nm taller and is insecticidal; the toxicity-conferring subunits are present at about 1 copy each.

The protein resides in the secreted. With respect to regulation, toxin complex is secreted when grown at 25 degrees Celsius or less; at higher temperatures the proteins are present intracellularly but not secreted. In terms of biological role, part of an orally active toxin complex (TC) with strong insecticidal effects on larvae of the Coleoptera Costelytra zealandica, Acrossidius tasmania and Adoryphorus couloni and some Lepidoptera larvae. The TC has an endochitinase activity. This Yersinia entomophaga protein is Toxin subunit YenC2.